The sequence spans 946 residues: Bifunctional glutamine synthetase adenylyltransferase/adenylyl-removing enzyme (946 aa).

The segment at 1-440 (MKPLSSPLQQ…VFNELIGDDE (440 aa)) is adenylyl removase. Residues 449-946 (SEQWRELWQD…ASWQKWLVEE (498 aa)) form an adenylyl transferase region.

It belongs to the GlnE family. The cofactor is Mg(2+).

It carries out the reaction [glutamine synthetase]-O(4)-(5'-adenylyl)-L-tyrosine + phosphate = [glutamine synthetase]-L-tyrosine + ADP. The catalysed reaction is [glutamine synthetase]-L-tyrosine + ATP = [glutamine synthetase]-O(4)-(5'-adenylyl)-L-tyrosine + diphosphate. Involved in the regulation of glutamine synthetase GlnA, a key enzyme in the process to assimilate ammonia. When cellular nitrogen levels are high, the C-terminal adenylyl transferase (AT) inactivates GlnA by covalent transfer of an adenylyl group from ATP to specific tyrosine residue of GlnA, thus reducing its activity. Conversely, when nitrogen levels are low, the N-terminal adenylyl removase (AR) activates GlnA by removing the adenylyl group by phosphorolysis, increasing its activity. The regulatory region of GlnE binds the signal transduction protein PII (GlnB) which indicates the nitrogen status of the cell. The chain is Bifunctional glutamine synthetase adenylyltransferase/adenylyl-removing enzyme from Shigella boydii serotype 18 (strain CDC 3083-94 / BS512).